The sequence spans 1338 residues: P-type sodium-transporting ATPase4 (1338 aa).

The tract at residues Met1 to His106 is disordered. Over residues Ala55–Arg69 the composition is skewed to basic and acidic residues. The span at Gly91–Gln104 shows a compositional bias: polar residues. A run of 8 helical transmembrane segments spans residues Ile229–Ser249, Trp255–Met275, Leu418–Ile438, Ile456–Val476, Phe985–Ala1005, Ile1068–Val1088, Met1261–Ile1281, and Cys1288–Leu1308.

The protein belongs to the cation transport ATPase (P-type) (TC 3.A.3) family.

The protein resides in the cell membrane. The catalysed reaction is Na(+)(in) + ATP + H2O = Na(+)(out) + ADP + phosphate + H(+). Inhibited by cipargamin, a synthetic spiroindolone. Inhibited by pyrazoleamide PA21A050, structurally unrelated to the spiroindolones. Inhibited by (+)-SJ733, a dihydroisoquinolone compound. Its function is as follows. Sodium-exporting ATPase. Required for the extrusion of Na(+) from the parasites to maintain a low cytosolic concentration of Na(+). Required for maintaining the viability of extracellular parasites but not for intracellular growth, egress or invasion. Involved in parasite virulence. The polypeptide is P-type sodium-transporting ATPase4 (Toxoplasma gondii (strain ATCC 50861 / VEG)).